Reading from the N-terminus, the 206-residue chain is Large ribosomal subunit protein uL4 (206 aa).

This sequence belongs to the universal ribosomal protein uL4 family. Part of the 50S ribosomal subunit.

One of the primary rRNA binding proteins, this protein initially binds near the 5'-end of the 23S rRNA. It is important during the early stages of 50S assembly. It makes multiple contacts with different domains of the 23S rRNA in the assembled 50S subunit and ribosome. In terms of biological role, forms part of the polypeptide exit tunnel. The protein is Large ribosomal subunit protein uL4 of Jannaschia sp. (strain CCS1).